A 304-amino-acid polypeptide reads, in one-letter code: HPr kinase/phosphorylase (304 aa).

Active-site residues include His136 and Lys157. 151–158 serves as a coordination point for ATP; that stretch reads GESGIGKS. Ser158 serves as a coordination point for Mg(2+). Asp175 (proton acceptor; for phosphorylation activity. Proton donor; for dephosphorylation activity) is an active-site residue. The tract at residues 198 to 207 is important for the catalytic mechanism of both phosphorylation and dephosphorylation; that stretch reads LEVRGMGIID. Residue Glu199 coordinates Mg(2+). Residue Arg240 is part of the active site. The important for the catalytic mechanism of dephosphorylation stretch occupies residues 261–266; sequence PIRPGR.

Belongs to the HPrK/P family. As to quaternary structure, homohexamer. It depends on Mg(2+) as a cofactor.

The catalysed reaction is [HPr protein]-L-serine + ATP = [HPr protein]-O-phospho-L-serine + ADP + H(+). The enzyme catalyses [HPr protein]-O-phospho-L-serine + phosphate + H(+) = [HPr protein]-L-serine + diphosphate. In terms of biological role, catalyzes the ATP- as well as the pyrophosphate-dependent phosphorylation of a specific serine residue in HPr, a phosphocarrier protein of the phosphoenolpyruvate-dependent sugar phosphotransferase system (PTS). HprK/P also catalyzes the pyrophosphate-producing, inorganic phosphate-dependent dephosphorylation (phosphorolysis) of seryl-phosphorylated HPr (P-Ser-HPr). The two antagonistic activities of HprK/P are regulated by several intracellular metabolites, which change their concentration in response to the absence or presence of rapidly metabolisable carbon sources (glucose, fructose, etc.) in the growth medium. Therefore, by controlling the phosphorylation state of HPr, HPrK/P is a sensor enzyme that plays a major role in the regulation of carbon metabolism and sugar transport: it mediates carbon catabolite repression (CCR), and regulates PTS-catalyzed carbohydrate uptake and inducer exclusion. The polypeptide is HPr kinase/phosphorylase (Clostridium acetobutylicum (strain ATCC 824 / DSM 792 / JCM 1419 / IAM 19013 / LMG 5710 / NBRC 13948 / NRRL B-527 / VKM B-1787 / 2291 / W)).